Consider the following 314-residue polypeptide: tRNA N6-adenosine threonylcarbamoyltransferase (314 aa).

Positions 106, 110, and 127 each coordinate Fe cation. Substrate-binding positions include Tyr-127–Ala-131, Asp-159, Gly-172, Glu-176, and Asn-255. Asp-283 provides a ligand contact to Fe cation.

This sequence belongs to the KAE1 / TsaD family. The cofactor is Fe(2+).

The protein resides in the cytoplasm. The catalysed reaction is L-threonylcarbamoyladenylate + adenosine(37) in tRNA = N(6)-L-threonylcarbamoyladenosine(37) in tRNA + AMP + H(+). Its function is as follows. Required for the formation of a threonylcarbamoyl group on adenosine at position 37 (t(6)A37) in tRNAs that read codons beginning with adenine. Is probably involved in the transfer of the threonylcarbamoyl moiety of threonylcarbamoyl-AMP (TC-AMP) to the N6 group of A37. The protein is tRNA N6-adenosine threonylcarbamoyltransferase of Nanoarchaeum equitans (strain Kin4-M).